The chain runs to 303 residues: Nitrogenase iron protein (303 aa).

11-18 contacts ATP; sequence GKGGIGKS. Cys112 provides a ligand contact to [4Fe-4S] cluster. Arg115 carries the post-translational modification ADP-ribosylarginine; by dinitrogenase reductase ADP-ribosyltransferase. Residue Cys147 participates in [4Fe-4S] cluster binding.

This sequence belongs to the NifH/BchL/ChlL family. As to quaternary structure, homodimer. [4Fe-4S] cluster is required as a cofactor. In terms of processing, the reversible ADP-ribosylation of Arg-115 inactivates the nitrogenase reductase and regulates nitrogenase activity.

The enzyme catalyses N2 + 8 reduced [2Fe-2S]-[ferredoxin] + 16 ATP + 16 H2O = H2 + 8 oxidized [2Fe-2S]-[ferredoxin] + 2 NH4(+) + 16 ADP + 16 phosphate + 6 H(+). Functionally, the key enzymatic reactions in nitrogen fixation are catalyzed by the nitrogenase complex, which has 2 components: the iron protein and the molybdenum-iron protein. This is Nitrogenase iron protein from Wolinella succinogenes (strain ATCC 29543 / DSM 1740 / CCUG 13145 / JCM 31913 / LMG 7466 / NCTC 11488 / FDC 602W) (Vibrio succinogenes).